The chain runs to 398 residues: MARGALDWIGAELEALDAKGLRRSLEPIGPAQGPVVQVGGRALVNLCSNDYLGLAADPRVRAAAADAAMRFGAGSGAARLVAGDLPPHGALEARLAAWKGREAALLFGSGYHANAGVPGALVGRDDAVFSDVLNHASIVDGCLLSRAELVRYRHCDVEELAGLLARTRARRKLVVTDAIFSMDGDAAPLRELAELCDRHGAMLYVDEAHAAGVLGPNGAGLAEALGVQDRVDVHMGTLGKALGAFGAYVAGERRLIELLVSRARPFVFSTALPPPACAAALAALEVVATEPSRRTHLFALCARMQAGLARLGFDVARVASPIFPVVLGTEVRALAAAAALRERGWFVRAIRPPTVPHGTSRLRVALSAAHDAAQVDGFLAALAAVLPDLPPAEPRRAG.

Residue Arg-23 participates in substrate binding. Residue 110 to 111 (GY) coordinates pyridoxal 5'-phosphate. A substrate-binding site is contributed by His-135. 3 residues coordinate pyridoxal 5'-phosphate: Ser-181, His-209, and Thr-237. The residue at position 240 (Lys-240) is an N6-(pyridoxal phosphate)lysine. Thr-354 contacts substrate.

The protein belongs to the class-II pyridoxal-phosphate-dependent aminotransferase family. BioF subfamily. In terms of assembly, homodimer. It depends on pyridoxal 5'-phosphate as a cofactor.

The catalysed reaction is 6-carboxyhexanoyl-[ACP] + L-alanine + H(+) = (8S)-8-amino-7-oxononanoate + holo-[ACP] + CO2. Its pathway is cofactor biosynthesis; biotin biosynthesis. Its function is as follows. Catalyzes the decarboxylative condensation of pimeloyl-[acyl-carrier protein] and L-alanine to produce 8-amino-7-oxononanoate (AON), [acyl-carrier protein], and carbon dioxide. The polypeptide is 8-amino-7-oxononanoate synthase (Anaeromyxobacter sp. (strain K)).